A 143-amino-acid polypeptide reads, in one-letter code: Large ribosomal subunit protein uL15 (143 aa).

Positions 1–59 are disordered; it reads MELNGIKPSLGAKHAKRRVGRGIGSGLGKTAGRGHKGQKSRAGGYHKVGFEGGQMPMQR. The span at 21–31 shows a compositional bias: gly residues; sequence RGIGSGLGKTA.

Belongs to the universal ribosomal protein uL15 family. In terms of assembly, part of the 50S ribosomal subunit.

Binds to the 23S rRNA. In Polaromonas sp. (strain JS666 / ATCC BAA-500), this protein is Large ribosomal subunit protein uL15.